Reading from the N-terminus, the 321-residue chain is Fibronectin type III domain-containing protein 8 (321 aa).

One can recognise a Fibronectin type-III domain in the interval 175–277 (VPEVPFICEH…KPYKFATVST (103 aa)).

The polypeptide is Fibronectin type III domain-containing protein 8 (Fndc8) (Mus musculus (Mouse)).